Here is a 460-residue protein sequence, read N- to C-terminus: MDMEVLGQEQSSEQLDLEEISRKISFLDKWREIFSYHRLGTNNSTPQNHEGNHTSADENEDGTGLSQPKGQGHLPSSGLCSIPNPSIISSKLGGFPISLAMATKLRQILFGNTVHVFSYNWKKAYFRFHDPSSELAFTLEVGKGGARSIQMAVQGSIIKYLLFTRKGKDCNLGNLCEISKKEQEQALAAALAGILWAAGAAQKATICLVTEDIYVASTPDYSVDNFTERLQLFEFLEKEAAEKFIYDHLLCFRGEGSHGVILFLYSLIFSRTFERLQMDLDVTTTQLLQPNAGGFLCRQAVLNMILTGRASPNVFNGCEEGKSQETLHGVLTRSDVGYLQWGKDASEDDRLSQVGSMLKTPKLPIWLCNINGNYSILFCTNRQLLSDWKMERLFDLYFYSGQPSQKKLVRLTIDTHSHHWERDQQEEKHGPRRRFSPVEMAIRTKWSEATINWNGTVPFF.

The interval 41–76 (TNNSTPQNHEGNHTSADENEDGTGLSQPKGQGHLPS) is disordered.

This sequence belongs to the MINDY deubiquitinase family. FAM188 subfamily.

This is Inactive ubiquitin carboxyl-terminal hydrolase MINDY-4B from Homo sapiens (Human).